An 85-amino-acid polypeptide reads, in one-letter code: Small ribosomal subunit protein eS21 (85 aa).

Belongs to the eukaryotic ribosomal protein eS21 family. As to quaternary structure, component of the 40S small ribosomal subunit.

The protein localises to the cytoplasm. It localises to the cytosol. Its subcellular location is the rough endoplasmic reticulum. The protein is Small ribosomal subunit protein eS21 (rps-21) of Pectinaria gouldii (Trumpet worm).